A 389-amino-acid chain; its full sequence is Lipid-A-disaccharide synthase (389 aa).

This sequence belongs to the LpxB family.

It carries out the reaction a lipid X + a UDP-2-N,3-O-bis[(3R)-3-hydroxyacyl]-alpha-D-glucosamine = a lipid A disaccharide + UDP + H(+). It participates in bacterial outer membrane biogenesis; LPS lipid A biosynthesis. Its function is as follows. Condensation of UDP-2,3-diacylglucosamine and 2,3-diacylglucosamine-1-phosphate to form lipid A disaccharide, a precursor of lipid A, a phosphorylated glycolipid that anchors the lipopolysaccharide to the outer membrane of the cell. The sequence is that of Lipid-A-disaccharide synthase from Burkholderia ambifaria (strain MC40-6).